Consider the following 130-residue polypeptide: Anti-adapter protein IraD (130 aa).

Belongs to the GpW/Gp25 family. IraD subfamily. In terms of assembly, interacts with RssB.

Its subcellular location is the cytoplasm. Inhibits RpoS proteolysis by regulating RssB activity, thereby increasing the stability of the sigma stress factor RpoS during oxidative stress. Its effect on RpoS stability is due to its interaction with RssB, which probably blocks the interaction of RssB with RpoS, and the consequent delivery of the RssB-RpoS complex to the ClpXP protein degradation pathway. The chain is Anti-adapter protein IraD from Escherichia coli O7:K1 (strain IAI39 / ExPEC).